A 495-amino-acid polypeptide reads, in one-letter code: MKKRKELNALIGLAGDSRRKKPKKGPSSHRLLRTEPPDSDSESSSEEEEEFGVVGNRSRFAKGDYLRCCKICYPLCGFVILAACVVACVGLVWMQVALKEDLDALKEKFRTMESNQKSSFQEIPKLNEELLSKQKQLEKIESGEMGLNKVWINITEMNKQISLLTSAVNHLKANVKSAADLISLPTTVEGLQKSVASIGNTLNSVHLAVEALQKTVDEHKKTMELLQSDMNQHFLKETPGSNQIIPSPSATSELDNKTHSENLKQDILYLHNSLEEVNSALVGYQRQNDLKLEGMNETVSNLTQRVNLIESDVVAMSKVEKKANLSFSMMGDRSATLKRQSLDQVTNRTDTVKIQSIKKEDSSNSQVSKLREKLQLISALTNKPESNRPPETADEEQVESFTSKPSALPKFSQFLGDPVEKAAQLRPISLPGVSSTEDLQDLFRKTGQDVDGKLTYQEIWTSLGSAMPEPESLRAFDSDGDGRYSFLELRVALGI.

Disordered stretches follow at residues 1-50 and 381-404; these read MKKR…EEEE and TNKPESNRPPETADEEQVESFTSK. Serine 17 bears the Phosphoserine mark. The segment covering 18–31 has biased composition (basic residues); the sequence is RRKKPKKGPSSHRL. Acidic residues predominate over residues 37–50; that stretch reads PDSDSESSSEEEEE. 2 EF-hand domains span residues 434–463 and 464–495; these read SSTEDLQDLFRKTGQDVDGKLTYQEIWTSL and GSAMPEPESLRAFDSDGDGRYSFLELRVALGI. Ca(2+)-binding residues include aspartate 477, aspartate 479, aspartate 481, arginine 483, and glutamate 488.

The protein is EF-hand calcium-binding domain-containing protein 14 (EFCAB14) of Homo sapiens (Human).